The sequence spans 352 residues: Molybdenum import ATP-binding protein ModC (352 aa).

An ABC transporter domain is found at 1-229 (MLELNFSQTL…SVMHPWLPKE (229 aa)). 31 to 38 (GVSGAGKT) contributes to the ATP binding site. The 64-residue stretch at 289-352 (QTSIRNVLRA…AQVKSVSITA (64 aa)) folds into the Mop domain.

Belongs to the ABC transporter superfamily. Molybdate importer (TC 3.A.1.8) family. In terms of assembly, the complex is composed of two ATP-binding proteins (ModC), two transmembrane proteins (ModB) and a solute-binding protein (ModA).

The protein resides in the cell inner membrane. The catalysed reaction is molybdate(out) + ATP + H2O = molybdate(in) + ADP + phosphate + H(+). Part of the ABC transporter complex ModABC involved in molybdenum import. Responsible for energy coupling to the transport system. This chain is Molybdenum import ATP-binding protein ModC, found in Salmonella paratyphi A (strain ATCC 9150 / SARB42).